Consider the following 203-residue polypeptide: Urease accessory protein UreG (203 aa).

14–21 contributes to the GTP binding site; the sequence is GPVGSGKT.

The protein belongs to the SIMIBI class G3E GTPase family. UreG subfamily. Homodimer. UreD, UreF and UreG form a complex that acts as a GTP-hydrolysis-dependent molecular chaperone, activating the urease apoprotein by helping to assemble the nickel containing metallocenter of UreC. The UreE protein probably delivers the nickel.

The protein resides in the cytoplasm. Facilitates the functional incorporation of the urease nickel metallocenter. This process requires GTP hydrolysis, probably effectuated by UreG. This is Urease accessory protein UreG from Rhizobium johnstonii (strain DSM 114642 / LMG 32736 / 3841) (Rhizobium leguminosarum bv. viciae).